The sequence spans 636 residues: Probable potassium transport system protein Kup (636 aa).

12 helical membrane passes run 22–42, 64–84, 114–134, 150–170, 182–202, 220–240, 261–281, 293–313, 351–371, 383–403, 408–428, and 433–453; these read MGLL…SPLY, ILSL…VMFI, ALMV…SMIT, FEGI…ALFL, LFGP…VHGI, FFIV…LALT, WFAL…AILL, LLAP…ATVI, IYIG…VIGF, VAVT…MLLL, PVLA…FFAA, and IVQG…LMST.

Belongs to the HAK/KUP transporter (TC 2.A.72) family.

It is found in the cell inner membrane. It catalyses the reaction K(+)(in) + H(+)(in) = K(+)(out) + H(+)(out). Its function is as follows. Transport of potassium into the cell. Likely operates as a K(+):H(+) symporter. The sequence is that of Probable potassium transport system protein Kup from Pseudomonas entomophila (strain L48).